Consider the following 331-residue polypeptide: Olfactory receptor 10S1 (331 aa).

The Extracellular segment spans residues 1–38; the sequence is MTSRSVCEKMTMTTENPNQTVVSHFFLEGLRYTAKHSS. The N-linked (GlcNAc...) asparagine glycan is linked to asparagine 18. Residues 39-59 form a helical membrane-spanning segment; sequence LFFLLFLLIYSITVAGNLLIL. Topologically, residues 60–67 are cytoplasmic; sequence LTVGSDSH. The helical transmembrane segment at 68-88 threads the bilayer; that stretch reads LSLPMYHFLGHLSFLDACLST. The Extracellular portion of the chain corresponds to 89–113; sequence VTVPKVMAGLLTLDGKVISFEGCAV. A disulfide bridge connects residues cysteine 111 and cysteine 203. The helical transmembrane segment at 114–134 threads the bilayer; the sequence is QLYCFHFLASTECFLYTVMAY. Residues 135–153 are Cytoplasmic-facing; the sequence is DRYLAICQPLHYPVAMNRR. A helical membrane pass occupies residues 154-174; that stretch reads MCAEMAGITWAIGATHAAIHT. Topologically, residues 175-211 are extracellular; sequence SLTFRLLYCGPCHIAYFFCDIPPVLKLACTDTTINEL. The helical transmembrane segment at 212–231 threads the bilayer; the sequence is VMLASIGIVAAGCLILIVIS. Topologically, residues 232-251 are cytoplasmic; it reads YIFIVAAVLRIRTAQGRQRA. A helical transmembrane segment spans residues 252 to 272; it reads FSPCTAQLTGVLLYYVPPVCI. The Extracellular portion of the chain corresponds to 273–283; the sequence is YLQPRSSEAGA. A helical transmembrane segment spans residues 284 to 304; the sequence is GAPAVFYTIVTPMLNPFIYTL. Topologically, residues 305–331 are cytoplasmic; the sequence is RNKEVKHALQRLLCSSFRESTAGSPPP.

It belongs to the G-protein coupled receptor 1 family.

The protein resides in the cell membrane. Functionally, odorant receptor. The protein is Olfactory receptor 10S1 (OR10S1) of Homo sapiens (Human).